We begin with the raw amino-acid sequence, 757 residues long: 5-methyltetrahydropteroyltriglutamate--homocysteine methyltransferase (757 aa).

5-methyltetrahydropteroyltri-L-glutamate is bound by residues R17–K20 and K117. L-homocysteine-binding positions include I434–S436 and E487. L-methionine contacts are provided by residues I434–S436 and E487. 5-methyltetrahydropteroyltri-L-glutamate is bound by residues R518–C519 and W564. Residue D602 coordinates L-homocysteine. Residue D602 participates in L-methionine binding. E608 serves as a coordination point for 5-methyltetrahydropteroyltri-L-glutamate. Residues H644, C646, and E668 each coordinate Zn(2+). H697 functions as the Proton donor in the catalytic mechanism. C729 is a Zn(2+) binding site.

It belongs to the vitamin-B12 independent methionine synthase family. It depends on Zn(2+) as a cofactor.

The catalysed reaction is 5-methyltetrahydropteroyltri-L-glutamate + L-homocysteine = tetrahydropteroyltri-L-glutamate + L-methionine. It participates in amino-acid biosynthesis; L-methionine biosynthesis via de novo pathway; L-methionine from L-homocysteine (MetE route): step 1/1. Catalyzes the transfer of a methyl group from 5-methyltetrahydrofolate to homocysteine resulting in methionine formation. In Proteus mirabilis (strain HI4320), this protein is 5-methyltetrahydropteroyltriglutamate--homocysteine methyltransferase.